The chain runs to 550 residues: Carboxylesterase 4A (550 aa).

Residues 1–20 (MNWILCLSLTLLLVVQTAWG) form the signal peptide. A disulfide bond links Cys88 and Cys116. Ser221 serves as the catalytic Acyl-ester intermediate. An intrachain disulfide couples Cys273 to Cys284. Asn276 carries an N-linked (GlcNAc...) asparagine glycan. The Charge relay system role is filled by Glu353. Residue Asn386 is glycosylated (N-linked (GlcNAc...) asparagine). The Charge relay system role is filled by His465.

The protein belongs to the type-B carboxylesterase/lipase family.

It localises to the secreted. In terms of biological role, probable carboxylesterase. This Bos taurus (Bovine) protein is Carboxylesterase 4A (CES4A).